A 143-amino-acid polypeptide reads, in one-letter code: Large ribosomal subunit protein uL11 (143 aa).

Belongs to the universal ribosomal protein uL11 family. Part of the ribosomal stalk of the 50S ribosomal subunit. Interacts with L10 and the large rRNA to form the base of the stalk. L10 forms an elongated spine to which L12 dimers bind in a sequential fashion forming a multimeric L10(L12)X complex. Post-translationally, one or more lysine residues are methylated.

In terms of biological role, forms part of the ribosomal stalk which helps the ribosome interact with GTP-bound translation factors. This chain is Large ribosomal subunit protein uL11, found in Pseudomonas savastanoi pv. phaseolicola (strain 1448A / Race 6) (Pseudomonas syringae pv. phaseolicola (strain 1448A / Race 6)).